The sequence spans 795 residues: Serine/threonine-protein kinase MARK1 (795 aa).

Positions 1–41 (MSARTPLPTVNERDTENHTSVDGYTETHIPPAKSSSRQNLP) are disordered. The residue at position 5 (T5) is a Phosphothreonine. In terms of domain architecture, Protein kinase spans 60–311 (YRLQKTIGKG…LEQIMKDRWM (252 aa)). Residues 66–74 (IGKGNFAKV) and K89 contribute to the ATP site. The active-site Proton acceptor is D182. Residue T208 is modified to Phosphothreonine. T215 is modified (phosphothreonine; by LKB1 and TAOK1). S219 carries the phosphoserine; by GSK3-beta modification. Positions 329–370 (DLSDAKRIDIMVTMGFARDEINDALVSQKYDEVMATYILLGR) constitute a UBA domain. Disordered stretches follow at residues 377-498 (GGES…SGGS) and 518-699 (QNGR…KPRS). A phosphoserine mark is found at S382, S390, S393, S403, S423, and S444. Residues 387 to 403 (CQRSRPSSDLNNSTLQS) show a composition bias toward polar residues. The span at 447–459 (SEQKEEWGKDTAR) shows a compositional bias: basic and acidic residues. The segment covering 462-473 (GSTTVGSKSEVT) has biased composition (polar residues). S475 bears the Phosphoserine mark. Positions 486 to 495 (TASPSNNVYS) are enriched in polar residues. Low complexity-rich tracts occupy residues 523 to 547 (SSLTEMSASSMSSAGSTVASAGPSA) and 585 to 599 (PAASPSAHSISASTP). S588 is subject to Phosphoserine. T613 carries the post-translational modification Phosphothreonine; by PKC/PRKCZ. Positions 647–657 (GTSTGIISKIT) are enriched in polar residues. 2 stretches are compositionally biased toward basic and acidic residues: residues 661-676 (VRRDPSEGEASGRADT) and 683-697 (DPKERDKDEGKEAKP). A Phosphoserine modification is found at S666. Residues 746-795 (DARQDSLVQWEMEVCKLPRLSLNGVRFKRISGTSIAFKNIASKIANELKL) enclose the KA1 domain.

Belongs to the protein kinase superfamily. CAMK Ser/Thr protein kinase family. SNF1 subfamily. Interacts with MAPT/TAU. It depends on Mg(2+) as a cofactor. In terms of processing, phosphorylated at Thr-215 by STK11/LKB1 in complex with STE20-related adapter-alpha (STRADA) pseudo kinase and CAB39. Phosphorylation at Thr-215 by TAOK1 activates the kinase activity, leading to phosphorylation and detachment of MAPT/TAU from microtubules. Phosphorylation at Ser-219 by GSK3-beta (GSK3B) inhibits the kinase activity. Phosphorylation at Thr-613 by PRKCZ/aPKC in polarized epithelial cells inhibits the kinase activity.

The protein localises to the cell membrane. Its subcellular location is the cytoplasm. The protein resides in the cytoskeleton. It localises to the cell projection. It is found in the dendrite. It carries out the reaction L-seryl-[protein] + ATP = O-phospho-L-seryl-[protein] + ADP + H(+). The catalysed reaction is L-threonyl-[protein] + ATP = O-phospho-L-threonyl-[protein] + ADP + H(+). It catalyses the reaction L-seryl-[tau protein] + ATP = O-phospho-L-seryl-[tau protein] + ADP + H(+). The enzyme catalyses L-threonyl-[tau protein] + ATP = O-phospho-L-threonyl-[tau protein] + ADP + H(+). With respect to regulation, inhibited by phosphorylation at Ser-219. Activated by phosphorylation on Thr-215. In terms of biological role, serine/threonine-protein kinase. Involved in cell polarity and microtubule dynamics regulation. Phosphorylates DCX, MAP2 and MAP4. Phosphorylates the microtubule-associated protein MAPT/TAU. Involved in cell polarity by phosphorylating the microtubule-associated proteins MAP2, MAP4 and MAPT/TAU at KXGS motifs, causing detachment from microtubules, and their disassembly. Involved in the regulation of neuronal migration through its dual activities in regulating cellular polarity and microtubule dynamics, possibly by phosphorylating and regulating DCX. Also acts as a positive regulator of the Wnt signaling pathway, probably by mediating phosphorylation of dishevelled proteins (DVL1, DVL2 and/or DVL3). The sequence is that of Serine/threonine-protein kinase MARK1 from Mus musculus (Mouse).